Reading from the N-terminus, the 508-residue chain is Methionine--tRNA ligase (508 aa).

Residues 12-22 carry the 'HIGH' region motif; sequence YYVNDIPHIGH. The 'KMSKS' region motif lies at 295 to 299; sequence KISKS. Lys298 contacts ATP.

This sequence belongs to the class-I aminoacyl-tRNA synthetase family. MetG type 2B subfamily. In terms of assembly, monomer.

It is found in the cytoplasm. It carries out the reaction tRNA(Met) + L-methionine + ATP = L-methionyl-tRNA(Met) + AMP + diphosphate. Functionally, is required not only for elongation of protein synthesis but also for the initiation of all mRNA translation through initiator tRNA(fMet) aminoacylation. This chain is Methionine--tRNA ligase, found in Rickettsia conorii (strain ATCC VR-613 / Malish 7).